The chain runs to 397 residues: S-adenosylmethionine synthase (397 aa).

ATP is bound at residue histidine 15. Aspartate 17 is a binding site for Mg(2+). K(+) is bound at residue glutamate 43. 2 residues coordinate L-methionine: glutamate 56 and glutamine 99. The segment at 99 to 109 (QSPDIAQGVTA) is flexible loop. Residues 173–175 (DGK), 242–243 (KF), aspartate 251, 257–258 (RK), alanine 274, and lysine 278 contribute to the ATP site. Position 251 (aspartate 251) interacts with L-methionine. Lysine 282 provides a ligand contact to L-methionine.

The protein belongs to the AdoMet synthase family. In terms of assembly, homotetramer; dimer of dimers. Mg(2+) is required as a cofactor. It depends on K(+) as a cofactor.

The protein resides in the cytoplasm. The enzyme catalyses L-methionine + ATP + H2O = S-adenosyl-L-methionine + phosphate + diphosphate. The protein operates within amino-acid biosynthesis; S-adenosyl-L-methionine biosynthesis; S-adenosyl-L-methionine from L-methionine: step 1/1. Its function is as follows. Catalyzes the formation of S-adenosylmethionine (AdoMet) from methionine and ATP. The overall synthetic reaction is composed of two sequential steps, AdoMet formation and the subsequent tripolyphosphate hydrolysis which occurs prior to release of AdoMet from the enzyme. The protein is S-adenosylmethionine synthase of Cutibacterium acnes (strain DSM 16379 / KPA171202) (Propionibacterium acnes).